Here is an 837-residue protein sequence, read N- to C-terminus: Striatin-interacting protein 1 (837 aa).

An N-acetylmethionine modification is found at Met1. 2 disordered regions span residues 1–67 (MEPA…ESPD) and 333–423 (AASP…KGLP). Residues 18-35 (PQPPPPPPPAAAQPPPGA) are compositionally biased toward pro residues. The span at 36–46 (PRAAAGLLPGG) shows a compositional bias: low complexity. Residues 47–60 (KAREFNRNQRKDSE) show a composition bias toward basic and acidic residues. Residues Ser59, Ser335, and Ser339 each carry the phosphoserine modification. The span at 356-377 (KALIKQDNLDAFNERDPYKADD) shows a compositional bias: basic and acidic residues. A compositionally biased stretch (acidic residues) spans 378 to 391 (SREEEEENDDDNSL). Ser788 bears the Phosphoserine mark. The required for STRIPAK core complex formation stretch occupies residues 796 to 837 (DNCLQSVLGQRVDLPEDFQMNYDLWLEREVFSKPISWEELLQ).

Belongs to the STRIP family. Part of the core of STRIPAK complexes composed of PP2A catalytic and scaffolding subunits, the striatins (PP2A regulatory subunits), the striatin-associated proteins MOB4, STRIP1 and STRIP2, PDCD10 and members of the STE20 kinases, such as STK24 and STK26. The STRIPAK complex can be extended by adapter proteins such as SLMAP:SIKE1, CTTNBP2 or CTTNBP2NL. Interacts with CDC42BPB. Interacts with CTTNBP2NL.

It is found in the cytoplasm. Functionally, plays a role in the regulation of cell morphology and cytoskeletal organization. Required in the cortical actin filament dynamics and cell shape. Part of the striatin-interacting phosphatase and kinase (STRIPAK) complexes. STRIPAK complexes have critical roles in protein (de)phosphorylation and are regulators of multiple signaling pathways including Hippo, MAPK, nuclear receptor and cytoskeleton remodeling. Different types of STRIPAK complexes are involved in a variety of biological processes such as cell growth, differentiation, apoptosis, metabolism and immune regulation. This is Striatin-interacting protein 1 from Homo sapiens (Human).